Consider the following 463-residue polypeptide: Glycine--tRNA ligase (463 aa).

Substrate is bound by residues R100 and E175. ATP contacts are provided by residues 207 to 209 (RNE), 217 to 222 (FRTREF), 291 to 292 (EL), and 335 to 338 (GADR). 222-226 (FEQME) provides a ligand contact to substrate. Position 331–335 (331–335 (EPSVG)) interacts with substrate.

This sequence belongs to the class-II aminoacyl-tRNA synthetase family. Homodimer.

It localises to the cytoplasm. The catalysed reaction is tRNA(Gly) + glycine + ATP = glycyl-tRNA(Gly) + AMP + diphosphate. Functionally, catalyzes the attachment of glycine to tRNA(Gly). In Clostridium kluyveri (strain NBRC 12016), this protein is Glycine--tRNA ligase.